The following is a 225-amino-acid chain: Uracil-DNA glycosylase (225 aa).

D61 serves as the catalytic Proton acceptor.

Belongs to the uracil-DNA glycosylase (UDG) superfamily. UNG family.

Its subcellular location is the cytoplasm. It carries out the reaction Hydrolyzes single-stranded DNA or mismatched double-stranded DNA and polynucleotides, releasing free uracil.. Excises uracil residues from the DNA which can arise as a result of misincorporation of dUMP residues by DNA polymerase or due to deamination of cytosine. This chain is Uracil-DNA glycosylase, found in Actinobacillus pleuropneumoniae serotype 5b (strain L20).